We begin with the raw amino-acid sequence, 376 residues long: DNA replication and repair protein RecF (376 aa).

30–37 (GNNAQGKS) contacts ATP.

Belongs to the RecF family.

The protein localises to the cytoplasm. In terms of biological role, the RecF protein is involved in DNA metabolism; it is required for DNA replication and normal SOS inducibility. RecF binds preferentially to single-stranded, linear DNA. It also seems to bind ATP. The protein is DNA replication and repair protein RecF of Nostoc sp. (strain PCC 7120 / SAG 25.82 / UTEX 2576).